We begin with the raw amino-acid sequence, 364 residues long: Dual-specificity RNA methyltransferase RlmN (364 aa).

Glu93 acts as the Proton acceptor in catalysis. The Radical SAM core domain occupies 99-337 (EDDRGTLCIS…ATIRKTRGDD (239 aa)). Cys106 and Cys342 are disulfide-bonded. [4Fe-4S] cluster is bound by residues Cys113, Cys117, and Cys120. Residues 167 to 168 (GE), Ser199, 221 to 223 (SLH), and Asn299 each bind S-adenosyl-L-methionine. Residue Cys342 is the S-methylcysteine intermediate of the active site.

The protein belongs to the radical SAM superfamily. RlmN family. The cofactor is [4Fe-4S] cluster.

The protein localises to the cytoplasm. The enzyme catalyses adenosine(2503) in 23S rRNA + 2 reduced [2Fe-2S]-[ferredoxin] + 2 S-adenosyl-L-methionine = 2-methyladenosine(2503) in 23S rRNA + 5'-deoxyadenosine + L-methionine + 2 oxidized [2Fe-2S]-[ferredoxin] + S-adenosyl-L-homocysteine. It catalyses the reaction adenosine(37) in tRNA + 2 reduced [2Fe-2S]-[ferredoxin] + 2 S-adenosyl-L-methionine = 2-methyladenosine(37) in tRNA + 5'-deoxyadenosine + L-methionine + 2 oxidized [2Fe-2S]-[ferredoxin] + S-adenosyl-L-homocysteine. Its function is as follows. Specifically methylates position 2 of adenine 2503 in 23S rRNA and position 2 of adenine 37 in tRNAs. m2A2503 modification seems to play a crucial role in the proofreading step occurring at the peptidyl transferase center and thus would serve to optimize ribosomal fidelity. This is Dual-specificity RNA methyltransferase RlmN from Dichelobacter nodosus (strain VCS1703A).